The chain runs to 603 residues: Growth-regulating factor 6 (603 aa).

The segment at 34–58 is disordered; sequence KHGRGNAGDQEHEWRPPAKQARGGD. The 36-residue stretch at 158–193 folds into the QLQ domain; the sequence is PFTPSQWIELEHQALIYKYLAANSPVPHSLLIPIRR. The WRC domain occupies 223–267; it reads DPEPGRCRRTDGKKWRCSRDAVADQKYCERHMNRGRHRSRKHVEG. 2 consecutive short sequence motifs (bipartite nuclear localization signal) follow at residues 228 to 238 and 256 to 263; these read RCRRTDGKKWR and RGRHRSRK. Low complexity predominate over residues 561–571; that stretch reads FGSVSSSTGSS. Residues 561–582 form a disordered region; sequence FGSVSSSTGSSPRLENHSVYDG.

The protein belongs to the GRF family.

Its subcellular location is the nucleus. Its function is as follows. Transcription activator that plays a regulatory role in gibberellin-induced stem elongation. This is Growth-regulating factor 6 (GRF6) from Oryza sativa subsp. japonica (Rice).